A 134-amino-acid chain; its full sequence is Small ribosomal subunit protein uS11 (134 aa).

Disordered stretches follow at residues 1–22 (MPPK…KNVA) and 114–134 (SIQD…RRRV). The span at 9–22 (AAKKVRRKEKKNVA) shows a compositional bias: basic residues.

It belongs to the universal ribosomal protein uS11 family. As to quaternary structure, part of the 30S ribosomal subunit. Interacts with proteins S7 and S18. Binds to IF-3.

Its function is as follows. Located on the platform of the 30S subunit, it bridges several disparate RNA helices of the 16S rRNA. Forms part of the Shine-Dalgarno cleft in the 70S ribosome. The sequence is that of Small ribosomal subunit protein uS11 from Streptomyces avermitilis (strain ATCC 31267 / DSM 46492 / JCM 5070 / NBRC 14893 / NCIMB 12804 / NRRL 8165 / MA-4680).